Reading from the N-terminus, the 536-residue chain is Ribulokinase (536 aa).

The protein belongs to the ribulokinase family.

The enzyme catalyses D-ribulose + ATP = D-ribulose 5-phosphate + ADP + H(+). It carries out the reaction L-ribulose + ATP = L-ribulose 5-phosphate + ADP + H(+). It participates in carbohydrate degradation; L-arabinose degradation via L-ribulose; D-xylulose 5-phosphate from L-arabinose (bacterial route): step 2/3. The polypeptide is Ribulokinase (Staphylococcus epidermidis (strain ATCC 12228 / FDA PCI 1200)).